The sequence spans 224 residues: MTEKRAVILLSGGLDSATVVAMAKAEGYSCYTMSFDYGQRHRAELNAAARVAHDLGVVEHKVIGLNLDGIGGSALTDSSIDVPEAPGEGIPVTYVPARNTVFLSLALGWAEVLEARDIFIGVNAVDYSGYPDCRPEFVEAFERMANLATKAGVEGQGFRIQAPLQNMSKAQIVQAGMARGVDYSLTVSCYQADDDGRACGKCDSCRLRADGFKAAGIEDPTRYF.

Leu-10–Val-20 contacts ATP. Residues Cys-189, Cys-199, Cys-202, and Cys-205 each coordinate Zn(2+).

This sequence belongs to the QueC family. Zn(2+) serves as cofactor.

It carries out the reaction 7-carboxy-7-deazaguanine + NH4(+) + ATP = 7-cyano-7-deazaguanine + ADP + phosphate + H2O + H(+). It functions in the pathway purine metabolism; 7-cyano-7-deazaguanine biosynthesis. Catalyzes the ATP-dependent conversion of 7-carboxy-7-deazaguanine (CDG) to 7-cyano-7-deazaguanine (preQ(0)). The sequence is that of 7-cyano-7-deazaguanine synthase from Pseudomonas putida (strain ATCC 700007 / DSM 6899 / JCM 31910 / BCRC 17059 / LMG 24140 / F1).